Consider the following 327-residue polypeptide: G protein pathway suppressor 2 (327 aa).

Residues 14 to 109 (MARALHRHIM…RRRKEQSDLT (96 aa)) are a coiled coil. Residues 26–65 (RERKRQEEEEVDKMMEQKMKEEQERRKKKEMEERMSLEET) form a disordered region. Residues Lys45 and Lys71 each participate in a glycyl lysine isopeptide (Lys-Gly) (interchain with G-Cter in SUMO1) cross-link. The interaction with SUMO stretch occupies residues 61-94 (SLEETKEQILKLQEKLSALQEEKHQLFLQLKKVL). 3 disordered regions span residues 178–208 (GQFQ…SPSQ), 253–285 (QKQM…APGL), and 300–327 (KSGF…FYHK). Residues 253–271 (QKQMEHANQQTSFSDSSSL) are compositionally biased toward polar residues. Arg312 carries the asymmetric dimethylarginine modification. Over residues 317 to 327 (QHSQNPRFYHK) the composition is skewed to polar residues. Asymmetric dimethylarginine; alternate is present on Arg323. Arg323 carries the post-translational modification Omega-N-methylarginine; alternate.

Component of the N-Cor repressor complex, at least composed of NCOR1, NCOR2, HDAC3, TBL1X, TBL1R, CORO2A and GPS2. Interacts (when sumoylated at Lys-71) with TBL1X; leading to protect GPS2 from degradation by the proteasome. Interacts with UBE2N; leading to inhibit UBE2N/Ubc13 activity. Interacts with TRAF1. Interacts with TRAF2. Interacts with TRAF6. Interacts with PPARG (when in the liganded conformation). Interacts with (sumoylated) NR1H2; interaction with sumoylated NR1H2 and NR5A2 onto hepatic acute phase protein promoters prevents N-Cor corepressor complex dissociation. Interacts with (sumoylated) NR5A2; interaction with sumoylated NR1H2 and NR5A2 onto hepatic acute phase protein promoters prevents N-Cor corepressor complex dissociation. Interacts with NR1H3. Interacts with RFX4. Interacts with ANKRD26. In terms of processing, sumoylation regulates its subcellular location. Sumoylation at Lys-45 and Lys-71 regulates the shuttling between the cytoplasm and the nucleus. Sumoylation at Lys-71 is required for interaction with TBL1X. Sumoylated at Lys-45 and Lys-71 in mitochondrion. Desumoylation by SENP1 leads to relocation from the mitochondria to the nucleus. Ubiquitinated at the C-terminus by SIAH2; leading to its degradation by the proteasome. Interaction with TBL1X and methylation at Arg-323 protect GPS2 against ubiquitination and degradation. Post-translationally, methylated at Arg-312 and Arg-323 by PRMT6. Methylation at Arg-323 protects from degradation by the proteasome.

The protein resides in the nucleus. Its subcellular location is the mitochondrion. It localises to the cytoplasm. The protein localises to the cytosol. Key regulator of inflammation, lipid metabolism and mitochondrion homeostasis that acts by inhibiting the activity of the ubiquitin-conjugating enzyme UBE2N/Ubc13, thereby inhibiting 'Lys-63'-linked ubiquitination. In the nucleus, can both acts as a corepressor and coactivator of transcription, depending on the context. Acts as a transcription coactivator in adipocytes by promoting the recruitment of PPARG to promoters: acts by inhibiting the activity of the ubiquitin-conjugating enzyme UBE2N/Ubc13, leading to stabilization of KDM4A and subsequent histone H3 'Lys-9' (H3K9) demethylation. Promotes cholesterol efflux by acting as a transcription coactivator. Acts as a regulator of B-cell development by inhibiting UBE2N/Ubc13, thereby restricting the activation of Toll-like receptors (TLRs) and B-cell antigen receptors (BCRs) signaling pathways. Acts as a key mediator of mitochondrial stress response: in response to mitochondrial depolarization, relocates from the mitochondria to the nucleus following desumoylation and specifically promotes expression of nuclear-encoded mitochondrial genes. Promotes transcription of nuclear-encoded mitochondrial genes by inhibiting UBE2N/Ubc13. Can also act as a corepressor as part of the N-Cor repressor complex by repressing active PPARG. Plays an anti-inflammatory role in macrophages and is required for insulin sensitivity by acting as a corepressor. Plays an anti-inflammatory role during the hepatic acute phase response by interacting with sumoylated NR1H2 and NR5A2 proteins, thereby preventing N-Cor corepressor complex dissociation. In the cytosol, also plays a non-transcriptional role by regulating insulin signaling and pro-inflammatory pathways. In the cytoplasm, acts as a negative regulator of inflammation by inhibiting the pro-inflammatory TNF-alpha pathway; acts by repressing UBE2N/Ubc13 activity. In the cytoplasm of adipocytes, restricts the activation of insulin signaling via inhibition of UBE2N/Ubc13-mediated ubiquitination of AKT. Able to suppress G-protein- and mitogen-activated protein kinase-mediated signal transduction. This Mus musculus (Mouse) protein is G protein pathway suppressor 2.